Reading from the N-terminus, the 608-residue chain is Zinc metalloproteinase-disintegrin-like agkihagin (608 aa).

A signal peptide spans 1 to 20; the sequence is MIQVLLVTICLAAFPYQGSS. Positions 21–189 are excised as a propeptide; it reads IILESGNVND…KKASQSNLTP (169 aa). Residues 199-395 form the Peptidase M12B domain; that stretch reads KFVKLFLVAD…NMPQCILKKP (197 aa). Disulfide bonds link Cys-310-Cys-390, Cys-350-Cys-374, and Cys-352-Cys-357. His-335 serves as a coordination point for Zn(2+). Residue Glu-336 is part of the active site. 2 residues coordinate Zn(2+): His-339 and His-345. The Disintegrin domain occupies 403-488; that stretch reads PPVCGNYFVE…ADCTDRFQKN (86 aa). Ca(2+) is bound by residues Val-405, Asn-408, Phe-410, Glu-412, Glu-415, and Asp-418. Cystine bridges form between Cys-406–Cys-435, Cys-417–Cys-430, Cys-419–Cys-425, Cys-429–Cys-452, Cys-443–Cys-449, Cys-448–Cys-474, Cys-461–Cys-481, Cys-468–Cys-499, Cys-492–Cys-504, Cys-511–Cys-561, Cys-526–Cys-570, Cys-539–Cys-549, Cys-556–Cys-596, and Cys-590–Cys-601. Residues 467 to 469 carry the D/ECD-tripeptide motif; the sequence is ECD. 5 residues coordinate Ca(2+): Asp-469, Met-470, Asp-472, Asp-483, and Arg-484. Asn-501 is a glycosylation site (N-linked (GlcNAc...) asparagine).

It belongs to the venom metalloproteinase (M12B) family. P-III subfamily. P-IIIc sub-subfamily. In terms of assembly, homodimer; disulfide-linked. Zn(2+) is required as a cofactor. In terms of tissue distribution, expressed by the venom gland.

Its subcellular location is the secreted. Inhibited by EDTA and EGTA. Not inhibited by PMSF, antipain, pepstatin, and iodoacetamide. Strongly inhibits the collagen-induced human platelet aggregation. Hydrolyzes the Aalpha-chain of fibrinogen (FGA), without cleavage of Bbeta- and gamma-chains. Induces apoptosis and strongly inhibits proliferation of endothelial cells as well as adhesion of the cells to extracellular matrix proteins. This is Zinc metalloproteinase-disintegrin-like agkihagin from Deinagkistrodon acutus (Hundred-pace snake).